Reading from the N-terminus, the 154-residue chain is Phosphopantetheine adenylyltransferase (154 aa).

Thr-10 contributes to the substrate binding site. Residues Thr-10 to Phe-11 and His-18 contribute to the ATP site. Substrate-binding residues include Lys-42, Leu-74, and Arg-88. ATP contacts are provided by residues Gly-89–Arg-91, Glu-99, and Asn-124–Ser-130.

Belongs to the bacterial CoaD family. Homohexamer. The cofactor is Mg(2+).

The protein localises to the cytoplasm. The catalysed reaction is (R)-4'-phosphopantetheine + ATP + H(+) = 3'-dephospho-CoA + diphosphate. Its pathway is cofactor biosynthesis; coenzyme A biosynthesis; CoA from (R)-pantothenate: step 4/5. Functionally, reversibly transfers an adenylyl group from ATP to 4'-phosphopantetheine, yielding dephospho-CoA (dPCoA) and pyrophosphate. In Nautilia profundicola (strain ATCC BAA-1463 / DSM 18972 / AmH), this protein is Phosphopantetheine adenylyltransferase.